The primary structure comprises 453 residues: Bifunctional protein GlmU (453 aa).

The tract at residues 1–226 (MKFSTVILAA…SIEVEGVNDR (226 aa)) is pyrophosphorylase. Residues 8 to 11 (LAAG), K22, Q73, 78 to 79 (GT), 100 to 102 (YGD), G137, E151, N166, and N224 each bind UDP-N-acetyl-alpha-D-glucosamine. Residue D102 coordinates Mg(2+). Mg(2+) is bound at residue N224. The segment at 227 to 247 (IQLARLERAFQARQAKKLLEQ) is linker. Positions 248–453 (GVMLRDPARF…AGWQRPAKKK (206 aa)) are N-acetyltransferase. R330 and K348 together coordinate UDP-N-acetyl-alpha-D-glucosamine. H360 serves as the catalytic Proton acceptor. Positions 363 and 374 each coordinate UDP-N-acetyl-alpha-D-glucosamine. Residues A377, 383–384 (NY), S402, A420, and R437 each bind acetyl-CoA.

The protein in the N-terminal section; belongs to the N-acetylglucosamine-1-phosphate uridyltransferase family. In the C-terminal section; belongs to the transferase hexapeptide repeat family. As to quaternary structure, homotrimer. It depends on Mg(2+) as a cofactor.

The protein resides in the cytoplasm. It catalyses the reaction alpha-D-glucosamine 1-phosphate + acetyl-CoA = N-acetyl-alpha-D-glucosamine 1-phosphate + CoA + H(+). The catalysed reaction is N-acetyl-alpha-D-glucosamine 1-phosphate + UTP + H(+) = UDP-N-acetyl-alpha-D-glucosamine + diphosphate. It participates in nucleotide-sugar biosynthesis; UDP-N-acetyl-alpha-D-glucosamine biosynthesis; N-acetyl-alpha-D-glucosamine 1-phosphate from alpha-D-glucosamine 6-phosphate (route II): step 2/2. The protein operates within nucleotide-sugar biosynthesis; UDP-N-acetyl-alpha-D-glucosamine biosynthesis; UDP-N-acetyl-alpha-D-glucosamine from N-acetyl-alpha-D-glucosamine 1-phosphate: step 1/1. It functions in the pathway bacterial outer membrane biogenesis; LPS lipid A biosynthesis. In terms of biological role, catalyzes the last two sequential reactions in the de novo biosynthetic pathway for UDP-N-acetylglucosamine (UDP-GlcNAc). The C-terminal domain catalyzes the transfer of acetyl group from acetyl coenzyme A to glucosamine-1-phosphate (GlcN-1-P) to produce N-acetylglucosamine-1-phosphate (GlcNAc-1-P), which is converted into UDP-GlcNAc by the transfer of uridine 5-monophosphate (from uridine 5-triphosphate), a reaction catalyzed by the N-terminal domain. This chain is Bifunctional protein GlmU, found in Vibrio cholerae serotype O1 (strain M66-2).